The primary structure comprises 368 residues: Peptide chain release factor 2 (368 aa).

Gln-250 carries the N5-methylglutamine modification.

Belongs to the prokaryotic/mitochondrial release factor family. In terms of processing, methylated by PrmC. Methylation increases the termination efficiency of RF2.

Its subcellular location is the cytoplasm. Its function is as follows. Peptide chain release factor 2 directs the termination of translation in response to the peptide chain termination codons UGA and UAA. The polypeptide is Peptide chain release factor 2 (Chlamydia trachomatis serovar L2b (strain UCH-1/proctitis)).